Consider the following 269-residue polypeptide: Formamidopyrimidine-DNA glycosylase (269 aa).

Catalysis depends on P2, which acts as the Schiff-base intermediate with DNA. The Proton donor role is filled by E3. K57 functions as the Proton donor; for beta-elimination activity in the catalytic mechanism. 3 residues coordinate DNA: H90, R109, and R150. An FPG-type zinc finger spans residues 235–269 (QVYGRAGEACLTCGTTIKRSKHGQRTTFYCPHCQR). Residue R259 is the Proton donor; for delta-elimination activity of the active site.

Belongs to the FPG family. As to quaternary structure, monomer. Requires Zn(2+) as cofactor.

The catalysed reaction is Hydrolysis of DNA containing ring-opened 7-methylguanine residues, releasing 2,6-diamino-4-hydroxy-5-(N-methyl)formamidopyrimidine.. It carries out the reaction 2'-deoxyribonucleotide-(2'-deoxyribose 5'-phosphate)-2'-deoxyribonucleotide-DNA = a 3'-end 2'-deoxyribonucleotide-(2,3-dehydro-2,3-deoxyribose 5'-phosphate)-DNA + a 5'-end 5'-phospho-2'-deoxyribonucleoside-DNA + H(+). In terms of biological role, involved in base excision repair of DNA damaged by oxidation or by mutagenic agents. Acts as a DNA glycosylase that recognizes and removes damaged bases. Has a preference for oxidized purines, such as 7,8-dihydro-8-oxoguanine (8-oxoG). Has AP (apurinic/apyrimidinic) lyase activity and introduces nicks in the DNA strand. Cleaves the DNA backbone by beta-delta elimination to generate a single-strand break at the site of the removed base with both 3'- and 5'-phosphates. The polypeptide is Formamidopyrimidine-DNA glycosylase (Edwardsiella ictaluri (strain 93-146)).